Consider the following 496-residue polypeptide: Probable cytosol aminopeptidase (496 aa).

Residues Lys252 and Asp257 each contribute to the Mn(2+) site. Lys264 is a catalytic residue. 3 residues coordinate Mn(2+): Asp275, Asp334, and Glu336. Arg338 is a catalytic residue.

The protein belongs to the peptidase M17 family. It depends on Mn(2+) as a cofactor.

It is found in the cytoplasm. It carries out the reaction Release of an N-terminal amino acid, Xaa-|-Yaa-, in which Xaa is preferably Leu, but may be other amino acids including Pro although not Arg or Lys, and Yaa may be Pro. Amino acid amides and methyl esters are also readily hydrolyzed, but rates on arylamides are exceedingly low.. It catalyses the reaction Release of an N-terminal amino acid, preferentially leucine, but not glutamic or aspartic acids.. Presumably involved in the processing and regular turnover of intracellular proteins. Catalyzes the removal of unsubstituted N-terminal amino acids from various peptides. This is Probable cytosol aminopeptidase from Leifsonia xyli subsp. xyli (strain CTCB07).